The chain runs to 134 residues: Profilin-2 (134 aa).

Cysteines 13 and 118 form a disulfide. The short motif at 84-100 (AVTRGKKGTGGITIKKT) is the Involved in PIP2 interaction element. Threonine 114 carries the phosphothreonine modification.

This sequence belongs to the profilin family. In terms of assembly, occurs in many kinds of cells as a complex with monomeric actin in a 1:1 ratio. In terms of processing, phosphorylated by MAP kinases.

It localises to the cytoplasm. Its subcellular location is the cytoskeleton. Binds to actin and affects the structure of the cytoskeleton. At high concentrations, profilin prevents the polymerization of actin, whereas it enhances it at low concentrations. This chain is Profilin-2, found in Olea europaea (Common olive).